The chain runs to 589 residues: Probable translation initiation factor IF-2 (589 aa).

Positions 14 to 231 (LRQPIVCVLG…GLAQRFLESE (218 aa)) constitute a tr-type G domain. The interval 23–30 (GHVDHGKT) is G1. 23-30 (GHVDHGKT) is a GTP binding site. Residues 48-52 (GITQR) are G2. Positions 84 to 87 (DTPG) are G3. Residues 84–88 (DTPGH) and 138–141 (NKID) contribute to the GTP site. The interval 138 to 141 (NKID) is G4. Residues 206 to 208 (SAK) are G5.

This sequence belongs to the TRAFAC class translation factor GTPase superfamily. Classic translation factor GTPase family. IF-2 subfamily.

In terms of biological role, function in general translation initiation by promoting the binding of the formylmethionine-tRNA to ribosomes. Seems to function along with eIF-2. This chain is Probable translation initiation factor IF-2, found in Thermoplasma volcanium (strain ATCC 51530 / DSM 4299 / JCM 9571 / NBRC 15438 / GSS1).